The chain runs to 145 residues: Large ribosomal subunit protein uL15 (145 aa).

The interval 1 to 50 is disordered; it reads MLHTIKPVANARKTTKRLGRGPGSGTGKTSGKGHKGQLARSGKTLRPGFE. Residues 20–30 show a composition bias toward gly residues; the sequence is RGPGSGTGKTS.

Belongs to the universal ribosomal protein uL15 family. As to quaternary structure, part of the 50S ribosomal subunit.

Functionally, binds to the 23S rRNA. This Phytoplasma australiense protein is Large ribosomal subunit protein uL15.